The sequence spans 342 residues: Isopentenyl-diphosphate delta-isomerase (342 aa).

11–12 (RK) provides a ligand contact to substrate. FMN contacts are provided by residues serine 68, 69-71 (SMT), serine 99, and asparagine 127. 99–101 (SMR) contributes to the substrate binding site. Position 162 (glutamine 162) interacts with substrate. Glutamate 163 lines the Mg(2+) pocket. Residues lysine 194, threonine 224, 274–276 (GLK), and 295–296 (AG) contribute to the FMN site.

It belongs to the IPP isomerase type 2 family. As to quaternary structure, homooctamer. Dimer of tetramers. FMN is required as a cofactor. It depends on NADPH as a cofactor. Requires Mg(2+) as cofactor.

It localises to the cytoplasm. The enzyme catalyses isopentenyl diphosphate = dimethylallyl diphosphate. Involved in the biosynthesis of isoprenoids. Catalyzes the 1,3-allylic rearrangement of the homoallylic substrate isopentenyl (IPP) to its allylic isomer, dimethylallyl diphosphate (DMAPP). In Rickettsia canadensis (strain McKiel), this protein is Isopentenyl-diphosphate delta-isomerase.